A 170-amino-acid chain; its full sequence is MDFKSKIRTVDDFPKPGISFKDITTLLKDGEAFHAAIETMAAHFEPLGINMVTGPEARGYIFASALAFRLRAGFVPIRKPGKLPWKTRSISYQLEYGEDRLEVHEDAFQPGQKVLVVDDLLATGGTIRATIDLVESLGAKVVGVAVLIELSDLGGRKRLEGHDVISLVQF.

This sequence belongs to the purine/pyrimidine phosphoribosyltransferase family. In terms of assembly, homodimer.

It is found in the cytoplasm. The catalysed reaction is AMP + diphosphate = 5-phospho-alpha-D-ribose 1-diphosphate + adenine. It participates in purine metabolism; AMP biosynthesis via salvage pathway; AMP from adenine: step 1/1. In terms of biological role, catalyzes a salvage reaction resulting in the formation of AMP, that is energically less costly than de novo synthesis. In Symbiobacterium thermophilum (strain DSM 24528 / JCM 14929 / IAM 14863 / T), this protein is Adenine phosphoribosyltransferase.